A 420-amino-acid polypeptide reads, in one-letter code: UDP-N-acetylglucosamine 1-carboxyvinyltransferase (420 aa).

Residue 22–23 (KN) coordinates phosphoenolpyruvate. Arg-93 lines the UDP-N-acetyl-alpha-D-glucosamine pocket. Catalysis depends on Cys-117, which acts as the Proton donor. Cys-117 is subject to 2-(S-cysteinyl)pyruvic acid O-phosphothioketal. Residues Asp-307 and Val-329 each contribute to the UDP-N-acetyl-alpha-D-glucosamine site.

Belongs to the EPSP synthase family. MurA subfamily.

The protein resides in the cytoplasm. The catalysed reaction is phosphoenolpyruvate + UDP-N-acetyl-alpha-D-glucosamine = UDP-N-acetyl-3-O-(1-carboxyvinyl)-alpha-D-glucosamine + phosphate. It participates in cell wall biogenesis; peptidoglycan biosynthesis. Its function is as follows. Cell wall formation. Adds enolpyruvyl to UDP-N-acetylglucosamine. In Marinobacter nauticus (strain ATCC 700491 / DSM 11845 / VT8) (Marinobacter aquaeolei), this protein is UDP-N-acetylglucosamine 1-carboxyvinyltransferase.